The following is a 184-amino-acid chain: dCTP deaminase (184 aa).

DCTP contacts are provided by residues 107-112, 131-133, glutamine 152, tyrosine 166, and glutamine 176; these read KSTYAR and TLE. The active-site Proton donor/acceptor is the glutamate 133.

Belongs to the dCTP deaminase family. As to quaternary structure, homotrimer.

It carries out the reaction dCTP + H2O + H(+) = dUTP + NH4(+). The protein operates within pyrimidine metabolism; dUMP biosynthesis; dUMP from dCTP (dUTP route): step 1/2. Its function is as follows. Catalyzes the deamination of dCTP to dUTP. The chain is dCTP deaminase from Paramagnetospirillum magneticum (strain ATCC 700264 / AMB-1) (Magnetospirillum magneticum).